The sequence spans 1624 residues: Reverse gyrase (1624 aa).

Residues 1–42 (MKAIYRGMCPNCRGAITDERLSNKNPCEGCLSEPILSEDYNE) form an RG N-terminal-type zinc finger. Zn(2+)-binding residues include Cys-9, Cys-12, Cys-27, and Cys-30. ATP is bound by residues Gln-89 and 106–113 (APTGMGKS). Residues 93–256 (VKRIIRGKSF…KLKKQLAKLL (164 aa)) enclose the Helicase ATP-binding domain. Positions 213-216 (DDVD) match the DEAD box motif. The interval 636-1624 (DLVKSALMIV…LYEEIKRYVR (989 aa)) is topoisomerase I. Residues 640–803 (SALMIVESPN…NIKRIEFHEV (164 aa)) enclose the Toprim domain. Glu-646 serves as a coordination point for Mg(2+). The segment at 720–749 (IKRCRDCGHQFVDWEQKGVCPRCGSRNVHD) adopts an RG C-terminal-type zinc-finger fold. Residues Cys-723, Cys-726, Cys-739, and Cys-742 each coordinate Zn(2+). Position 772 (Asp-772) interacts with Mg(2+). Positions 819 to 1623 (NEDRVNAQLV…ELYEEIKRYV (805 aa)) constitute a Topo IA-type catalytic domain. The 116-residue stretch at 1107–1222 (IFGVILGKGT…LSVYLYQIGI (116 aa)) folds into the DOD-type homing endonuclease domain. The active-site O-(5'-phospho-DNA)-tyrosine intermediate is the Tyr-1366.

The protein in the N-terminal section; belongs to the DEAD box helicase family. DDVD subfamily. It in the C-terminal section; belongs to the type IA topoisomerase family. Monomer. Zn(2+) serves as cofactor. Requires Mg(2+) as cofactor. In terms of processing, this protein undergoes a protein self splicing that involves a post-translational excision of the intervening region (intein) followed by peptide ligation.

It localises to the cytoplasm. The catalysed reaction is ATP + H2O = ADP + phosphate + H(+). Modifies the topological state of DNA by introducing positive supercoils in an ATP-dependent process, increasing the linking number in steps of +1. Binds to single-stranded DNA, transiently cleaves and then rejoins the ends, introducing a positive supercoil in the process. The scissile phosphodiester is attacked by the catalytic tyrosine of the enzyme, resulting in the formation of a DNA-(5'-phosphotyrosyl)-enzyme intermediate. Probably involved in rewinding DNA strands in regions of the chromosome that have opened up to allow replication, transcription, DNA repair and/or for DNA protection. The chain is Reverse gyrase from Pyrococcus horikoshii (strain ATCC 700860 / DSM 12428 / JCM 9974 / NBRC 100139 / OT-3).